The following is a 602-amino-acid chain: Elongation factor 4 (602 aa).

In terms of domain architecture, tr-type G spans 7–189; the sequence is NNIRNFSIIA…RILTAVPPPQ (183 aa). Residues 19 to 24 and 136 to 139 each bind GTP; these read DHGKST and NKID.

The protein belongs to the TRAFAC class translation factor GTPase superfamily. Classic translation factor GTPase family. LepA subfamily.

The protein localises to the cell inner membrane. It catalyses the reaction GTP + H2O = GDP + phosphate + H(+). Functionally, required for accurate and efficient protein synthesis under certain stress conditions. May act as a fidelity factor of the translation reaction, by catalyzing a one-codon backward translocation of tRNAs on improperly translocated ribosomes. Back-translocation proceeds from a post-translocation (POST) complex to a pre-translocation (PRE) complex, thus giving elongation factor G a second chance to translocate the tRNAs correctly. Binds to ribosomes in a GTP-dependent manner. The protein is Elongation factor 4 of Protochlamydia amoebophila (strain UWE25).